Consider the following 248-residue polypeptide: GPN-loop GTPase PAB0955 (248 aa).

10-15 (GSGKTT) contacts GTP. The Gly-Pro-Asn (GPN)-loop; involved in dimer interface motif lies at 65–67 (GPN). Residues 165 to 168 (NKVD) and Ala224 each bind GTP.

It belongs to the GPN-loop GTPase family. Homodimer. Interacts with DNA topoisomerase VI subunit B (top6B), DNA primase DnaG and RF-C.

Functionally, small GTPase that may be involved in genome maintenance. Has weak intrinsic GTPase activity but displays no ATPase activity. The sequence is that of GPN-loop GTPase PAB0955 from Pyrococcus abyssi (strain GE5 / Orsay).